Consider the following 274-residue polypeptide: Probable formate transporter (274 aa).

The next 7 helical transmembrane spans lie at 31 to 51, 62 to 82, 118 to 138, 176 to 196, 200 to 220, 226 to 246, and 248 to 268; these read IVLSFLAGAYIAFGGLLAEVV, AGLVKLVFGAVFPVGLMLVVI, VFNLVGAVFVAYFLAVATGIL, AFWRAVGCNWLVCLAVYLAIA, IIGKIWGIWFPIFAFVAIGFE, MFFIPVGIFLGGVTWSQFFMN, and LIPVTLGNIVGGAIFVACLYW.

Belongs to the FNT transporter (TC 1.A.16) family.

The protein resides in the cell membrane. May act as a formate transporter. In Methanothermobacter thermautotrophicus (Methanobacterium thermoformicicum), this protein is Probable formate transporter (fdhC).